Consider the following 93-residue polypeptide: Putative nuclease p44 (93 aa).

In terms of domain architecture, VRR-NUC spans 5-84; sequence REDSIEKHLV…HQVIVLDSQD (80 aa).

Mg(2+) serves as cofactor.

Its function is as follows. Nuclease. This Escherichia coli (Bacteriophage APSE-1) protein is Putative nuclease p44 (44).